We begin with the raw amino-acid sequence, 268 residues long: Tryptophan synthase alpha chain (268 aa).

Residues Glu-49 and Asp-60 each act as proton acceptor in the active site.

It belongs to the TrpA family. Tetramer of two alpha and two beta chains.

The catalysed reaction is (1S,2R)-1-C-(indol-3-yl)glycerol 3-phosphate + L-serine = D-glyceraldehyde 3-phosphate + L-tryptophan + H2O. Its pathway is amino-acid biosynthesis; L-tryptophan biosynthesis; L-tryptophan from chorismate: step 5/5. In terms of biological role, the alpha subunit is responsible for the aldol cleavage of indoleglycerol phosphate to indole and glyceraldehyde 3-phosphate. This chain is Tryptophan synthase alpha chain, found in Shigella boydii serotype 4 (strain Sb227).